Reading from the N-terminus, the 536-residue chain is Chaperonin GroEL (536 aa).

ATP contacts are provided by residues 30-33, 86-90, G414, and D494; these read TLGP and DGTTT.

The protein belongs to the chaperonin (HSP60) family. As to quaternary structure, forms a cylinder of 14 subunits composed of two heptameric rings stacked back-to-back. Interacts with the co-chaperonin GroES.

Its subcellular location is the cytoplasm. It carries out the reaction ATP + H2O + a folded polypeptide = ADP + phosphate + an unfolded polypeptide.. Its function is as follows. Together with its co-chaperonin GroES, plays an essential role in assisting protein folding. The GroEL-GroES system forms a nano-cage that allows encapsulation of the non-native substrate proteins and provides a physical environment optimized to promote and accelerate protein folding. The chain is Chaperonin GroEL from Methanospirillum hungatei JF-1 (strain ATCC 27890 / DSM 864 / NBRC 100397 / JF-1).